A 500-amino-acid chain; its full sequence is Probable lipoprotein aminopeptidase LpqL (500 aa).

The first 24 residues, 1 to 24 (MVNKSRMMPAVLAVAVVVAFLTTG), serve as a signal peptide directing secretion. C25 carries N-palmitoyl cysteine lipidation. C25 carries the S-diacylglycerol cysteine lipid modification. The region spanning 140-231 (VTGPLVAAPA…VTKSVGFQLR (92 aa)) is the PA domain. Positions 271 and 283 each coordinate Zn(2+). The active-site Proton acceptor is E316. Zn(2+) is bound by residues E317, D345, and H448.

The protein belongs to the peptidase M28 family. M28A subfamily. It depends on Zn(2+) as a cofactor. In terms of processing, modified by Lgt on Cys-25 with an S-linked diacylglycerol with a mixture of C16 and C19 fatty acids (palmitic and tuberculostearic acid), signal peptide is removed by LspA, modified by Lnt with an amide-linked mixture of C16 and C19 fatty acids, expressed in M.bovis.

The protein resides in the cell membrane. It carries out the reaction Release of an N-terminal amino acid, Xaa-|-Yaa-, in which Xaa is preferably Leu, but may be other amino acids including Pro although not Arg or Lys, and Yaa may be Pro. Amino acid amides and methyl esters are also readily hydrolyzed, but rates on arylamides are exceedingly low.. An aminopeptidase; acts on free N-terminal amino groups with a very strong preference for Leu in the first position. This is Probable lipoprotein aminopeptidase LpqL (lpqL) from Mycobacterium tuberculosis (strain ATCC 25618 / H37Rv).